The chain runs to 191 residues: Ubiquinol-cytochrome c reductase iron-sulfur subunit (191 aa).

A helical transmembrane segment spans residues Ala18 to Ile35. Residues Arg94 to Lys189 form the Rieske domain. Residues Asp95 to Pro116 are disordered. 4 residues coordinate [2Fe-2S] cluster: Cys133, His135, Cys153, and His156. A disulfide bridge connects residues Cys138 and Cys155.

It belongs to the Rieske iron-sulfur protein family. As to quaternary structure, the main subunits of complex b-c1 are: cytochrome b, cytochrome c1 and the Rieske protein. It depends on [2Fe-2S] cluster as a cofactor.

Its subcellular location is the cell membrane. The catalysed reaction is a quinol + 2 Fe(III)-[cytochrome c](out) = a quinone + 2 Fe(II)-[cytochrome c](out) + 2 H(+)(out). Its function is as follows. Component of the ubiquinol-cytochrome c reductase complex (complex III or cytochrome b-c1 complex), which is a respiratory chain that generates an electrochemical potential coupled to ATP synthesis. In Rhodobacter capsulatus (strain ATCC BAA-309 / NBRC 16581 / SB1003), this protein is Ubiquinol-cytochrome c reductase iron-sulfur subunit (petA).